The primary structure comprises 585 residues: Formate--tetrahydrofolate ligase (585 aa).

Residue 65-72 (TPHGEGKT) participates in ATP binding.

The protein belongs to the formate--tetrahydrofolate ligase family.

It catalyses the reaction (6S)-5,6,7,8-tetrahydrofolate + formate + ATP = (6R)-10-formyltetrahydrofolate + ADP + phosphate. It participates in one-carbon metabolism; tetrahydrofolate interconversion. The protein is Formate--tetrahydrofolate ligase of Shewanella baltica (strain OS155 / ATCC BAA-1091).